The chain runs to 496 residues: Probable chlorophyll(ide) b reductase NYC1, chloroplastic (496 aa).

The transit peptide at 1–43 directs the protein to the chloroplast; it reads MTTLTKIQVYPQVLEHRLFFRDPIRVGSRLTCRERSNRVYVHR. The next 2 membrane-spanning stretches (helical) occupy residues 105-125 and 132-152; these read YIVT…LSGG and LVWY…ANMV. 166-190 provides a ligand contact to NAD(+); sequence ITGSTRGLGKALAREFLLSGDRVIV. Residues 195–224 adopt a coiled-coil conformation; the sequence is SESVDMTVKELEQNLKEIMSNASESARKKL. Y330 (proton acceptor) is an active-site residue. The chain crosses the membrane as a helical span at residues 470-490; that stretch reads WVSVFSLSVVCAFIILQSTTP.

The protein belongs to the short-chain dehydrogenases/reductases (SDR) family. Interacts with NOL to form a complex that acts as a chlorophyll b reductase. Interacts with HCAR, RCCR, SGR1 and the LHCII complex. Part of a SGR1-CCE-LHCII complex, which acts in chlorophyll breakdown.

It is found in the plastid. Its subcellular location is the chloroplast thylakoid membrane. It catalyses the reaction 7(1)-hydroxychlorophyllide a + NAD(+) = chlorophyllide b + NADH + H(+). It carries out the reaction 7(1)-hydroxychlorophyllide a + NADP(+) = chlorophyllide b + NADPH + H(+). In terms of biological role, involved in chlorophyll b degradation. Belongs to the chlorophyll catabolic enzymes (CCEs). This chain is Probable chlorophyll(ide) b reductase NYC1, chloroplastic (NYC1), found in Arabidopsis thaliana (Mouse-ear cress).